The primary structure comprises 205 residues: Regulator of G-protein signaling 4 (205 aa).

Residues Cys2, Cys12, and Cys95 are each lipidated (S-palmitoyl cysteine). One can recognise an RGS domain in the interval 62-178; sequence SLENLINHEC…LKSRFYLDLT (117 aa).

In terms of processing, either Cys-2 or Cys-12 or both are palmitoylated. Phosphorylated by cyclic GMP-dependent protein kinase.

Inhibits signal transduction by increasing the GTPase activity of G protein alpha subunits thereby driving them into their inactive GDP-bound form. Activity on G(z)-alpha is inhibited by phosphorylation of the G-protein. Activity on G(z)-alpha and G(i)-alpha-1 is inhibited by palmitoylation of the G-protein. This chain is Regulator of G-protein signaling 4 (Rgs4), found in Rattus norvegicus (Rat).